Here is a 290-residue protein sequence, read N- to C-terminus: Porphobilinogen deaminase (290 aa).

Cys238 carries the post-translational modification S-(dipyrrolylmethanemethyl)cysteine.

This sequence belongs to the HMBS family. Monomer. The cofactor is dipyrromethane.

It carries out the reaction 4 porphobilinogen + H2O = hydroxymethylbilane + 4 NH4(+). It participates in porphyrin-containing compound metabolism; protoporphyrin-IX biosynthesis; coproporphyrinogen-III from 5-aminolevulinate: step 2/4. In terms of biological role, tetrapolymerization of the monopyrrole PBG into the hydroxymethylbilane pre-uroporphyrinogen in several discrete steps. This Clostridium botulinum (strain Eklund 17B / Type B) protein is Porphobilinogen deaminase.